We begin with the raw amino-acid sequence, 246 residues long: MTSVASSSSRIVTESPVVVALDYNNRDSALAFVDLIDPRDCRLKVGKEMFTLFGPQIVRDLQQRGFDVFLDLKFHDIPNTTAHAVAAAADLGVWMVNVHASGGARMMTAAREALIPFGKDAPLLIAVTVLTSMEASDLLDLGVTLSPAEHAERLARLTQNCGLDGVVCSAQEAVRFKSALGHNFKLVTPGIRPQGSDAGDQRRIMTPEEALAAGVDYMVIGRPVTQSADPALTLKAINASLGKVTG.

Residues Asp22, Lys44, 71 to 80 (DLKFHDIPNT), Thr131, Arg192, Gln201, Gly221, and Arg222 each bind substrate. Lys73 (proton donor) is an active-site residue.

The protein belongs to the OMP decarboxylase family. Type 1 subfamily. In terms of assembly, homodimer.

It carries out the reaction orotidine 5'-phosphate + H(+) = UMP + CO2. The protein operates within pyrimidine metabolism; UMP biosynthesis via de novo pathway; UMP from orotate: step 2/2. Catalyzes the decarboxylation of orotidine 5'-monophosphate (OMP) to uridine 5'-monophosphate (UMP). The polypeptide is Orotidine 5'-phosphate decarboxylase (Enterobacter sp. (strain 638)).